Here is a 153-residue protein sequence, read N- to C-terminus: Prostaglandin E synthase (153 aa).

The Lumenal segment spans residues 1 to 13 (MPPSGLELMNGQV). A helical membrane pass occupies residues 14 to 42 (LPAFLLCSALLVIKMYVVAVITGQVRLRK). Glutathione is bound at residue Arg-39. Over 43–61 (KAFANPEDAQRHGGLQYCR) the chain is Cytoplasmic. Residues 62 to 91 (NDPDVERCLRAHRNDMETIYPFLFLGFVYS) form a helical membrane-spanning segment. Residue 74 to 78 (RNDME) participates in glutathione binding. Residues 92–96 (FLGPN) are Lumenal-facing. A helical membrane pass occupies residues 97–120 (PFVARMHFLVFFLGRMVHTVAYLG). Glutathione is bound by residues His-114 and Tyr-118. The Cytoplasmic portion of the chain corresponds to 121–124 (KLRA). A helical membrane pass occupies residues 125–153 (PTRSLAYTLAQLPCASMALQIVWEAARHL). 127–131 (RSLAY) is a glutathione binding site.

Belongs to the MAPEG family. As to quaternary structure, homotrimer. Requires glutathione as cofactor.

It is found in the membrane. Its subcellular location is the cytoplasm. It localises to the perinuclear region. The catalysed reaction is prostaglandin H2 = prostaglandin E2. It carries out the reaction 2-glyceryl-prostaglandin H2 = 2-glyceryl-prostaglandin E2. The enzyme catalyses prostaglandin G2 = (15S)-15-hydroperoxy-prostaglandin E2. It catalyses the reaction 1-chloro-2,4-dinitrobenzene + glutathione = 2,4-dinitrophenyl-S-glutathione + chloride + H(+). The catalysed reaction is (5S)-hydroperoxy-(6E,8Z,11Z,14Z)-eicosatetraenoate + 2 glutathione = (5S)-hydroxy-(6E,8Z,11Z,14Z)-eicosatetraenoate + glutathione disulfide + H2O. It functions in the pathway lipid metabolism; prostaglandin biosynthesis. Functionally, terminal enzyme of the cyclooxygenase (COX)-2-mediated prostaglandin E2 (PGE2) biosynthetic pathway. Catalyzes the glutathione-dependent oxidoreduction of prostaglandin endoperoxide H2 (PGH2) to prostaglandin E2 (PGE2) in response to inflammatory stimuli. Plays a key role in inflammation response, fever and pain. Also catalyzes the oxidoreduction of endocannabinoids into prostaglandin glycerol esters and PGG2 into 15-hydroperoxy-PGE2. In addition, displays low glutathione transferase and glutathione-dependent peroxidase activities, toward 1-chloro-2,4-dinitrobenzene and 5-hydroperoxyicosatetraenoic acid (5-HPETE), respectively. The chain is Prostaglandin E synthase (PTGES) from Bos taurus (Bovine).